A 32-amino-acid polypeptide reads, in one-letter code: Cytochrome b6-f complex subunit 7 (32 aa).

The helical transmembrane segment at 5-25 (IFGTAAIFWVLIPIGLVGGAL) threads the bilayer.

Belongs to the PetM family. In terms of assembly, the 4 large subunits of the cytochrome b6-f complex are cytochrome b6, subunit IV (17 kDa polypeptide, PetD), cytochrome f and the Rieske protein, while the 4 small subunits are PetG, PetL, PetM and PetN. The complex functions as a dimer.

The protein resides in the cellular thylakoid membrane. In terms of biological role, component of the cytochrome b6-f complex, which mediates electron transfer between photosystem II (PSII) and photosystem I (PSI), cyclic electron flow around PSI, and state transitions. The sequence is that of Cytochrome b6-f complex subunit 7 from Synechococcus sp. (strain CC9902).